We begin with the raw amino-acid sequence, 192 residues long: Small ribosomal subunit protein eS7 (192 aa).

This sequence belongs to the eukaryotic ribosomal protein eS7 family.

In Culex quinquefasciatus (Southern house mosquito), this protein is Small ribosomal subunit protein eS7 (RpS7).